Consider the following 507-residue polypeptide: ATP synthase subunit alpha, chloroplastic (507 aa).

Residue 170–177 (GDRQTGKT) participates in ATP binding.

It belongs to the ATPase alpha/beta chains family. As to quaternary structure, F-type ATPases have 2 components, CF(1) - the catalytic core - and CF(0) - the membrane proton channel. CF(1) has five subunits: alpha(3), beta(3), gamma(1), delta(1), epsilon(1). CF(0) has four main subunits: a, b, b' and c.

The protein resides in the plastid. Its subcellular location is the chloroplast thylakoid membrane. It carries out the reaction ATP + H2O + 4 H(+)(in) = ADP + phosphate + 5 H(+)(out). Its function is as follows. Produces ATP from ADP in the presence of a proton gradient across the membrane. The alpha chain is a regulatory subunit. This chain is ATP synthase subunit alpha, chloroplastic, found in Gossypium barbadense (Sea Island cotton).